The primary structure comprises 134 residues: Replication enhancer protein (134 aa).

It belongs to the geminiviridae replication enhancer protein family. As to quaternary structure, homooligomer. Interacts with the replication-associated protein (REP). Interacts with host proliferating cell nuclear antigen (PCNA). Interacts with host retinoblastoma-related protein 1 (RBR1), and may thereby deregulate the host cell cycle. Oligomerization and interaction with PCNA are necessary for optimal replication enhancement.

In terms of biological role, increases viral DNA accumulation. Enhances infectivity and symptom expression. This is Replication enhancer protein from Cynanchum acutum (Tomato).